We begin with the raw amino-acid sequence, 280 residues long: MKRVKTYIPGLDEILYGGIPERHIVLVSGGPGTGKSILGKQFLYNGLTKGEGGVFIALEEHPVSVRRSFEHFKWDVRKYEREGKFAIIDTFTGGIGNVAQREKYVVKSIDDVKELSENIRAAIKDINATRIVVDSVSTLYLTKPAMARSIVMQLKRVISGLGCTAIFVSQVSVGERGFGGPGVEHAVDGIIRLDLDEVEGVMYRSIIIWKMRDTKISMVRHPMDITDNGIIVQWDKYLKISNWSVSIQPLPENEISQMKKAVEEAEKEVEVKVEGKEEEE.

The 245-residue stretch at 2-246 folds into the KaiC domain; that stretch reads KRVKTYIPGL…YLKISNWSVS (245 aa). An ATP-binding site is contributed by 29 to 36; that stretch reads GGPGTGKS.

It belongs to the UPF0273 family.

This is UPF0273 protein SSO1861 from Saccharolobus solfataricus (strain ATCC 35092 / DSM 1617 / JCM 11322 / P2) (Sulfolobus solfataricus).